The chain runs to 310 residues: tRNA dimethylallyltransferase (310 aa).

14 to 21 (GPTASGKS) contributes to the ATP binding site. Substrate is bound at residue 16–21 (TASGKS). Interaction with substrate tRNA regions lie at residues 39–42 (DSMQ) and 163–167 (QRIVR).

It belongs to the IPP transferase family. In terms of assembly, monomer. Mg(2+) serves as cofactor.

The catalysed reaction is adenosine(37) in tRNA + dimethylallyl diphosphate = N(6)-dimethylallyladenosine(37) in tRNA + diphosphate. Catalyzes the transfer of a dimethylallyl group onto the adenine at position 37 in tRNAs that read codons beginning with uridine, leading to the formation of N6-(dimethylallyl)adenosine (i(6)A). The chain is tRNA dimethylallyltransferase from Brucella suis biovar 1 (strain 1330).